The primary structure comprises 460 residues: CUGBP Elav-like family member 6 (460 aa).

Residues 1 to 10 (MAAAPGGSAP) show a composition bias toward low complexity. Residues 1 to 37 (MAAAPGGSAPPAGPSPRLAFSTADSGGGMSGLNPGPA) are disordered. RRM domains lie at 46 to 127 (IKLF…PAAS) and 134 to 214 (RKLF…LADT). The tract at residues 316 to 336 (NGFGSLTPQSNGQPGSDTLYN) is disordered. The span at 319–336 (GSLTPQSNGQPGSDTLYN) shows a compositional bias: polar residues. The RRM 3 domain maps to 375-453 (CNLFIYHLPQ…KRLKVQLKRP (79 aa)).

Belongs to the CELF/BRUNOL family.

Its subcellular location is the nucleus. The protein resides in the cytoplasm. Functionally, RNA-binding protein implicated in the regulation of pre-mRNA alternative splicing. Mediates exon inclusion and/or exclusion in pre-mRNA that are subject to tissue-specific and developmentally regulated alternative splicing. Specifically activates exon 5 inclusion of TNNT2 in a muscle-specific splicing enhancer (MSE)-dependent manner. Promotes also exon exclusion of INSR pre-mRNA. The polypeptide is CUGBP Elav-like family member 6 (Celf6) (Mus musculus (Mouse)).